Consider the following 950-residue polypeptide: Glycine dehydrogenase (decarboxylating) (950 aa).

An N6-(pyridoxal phosphate)lysine modification is found at Lys698.

It belongs to the GcvP family. In terms of assembly, the glycine cleavage system is composed of four proteins: P, T, L and H. The cofactor is pyridoxal 5'-phosphate.

It carries out the reaction N(6)-[(R)-lipoyl]-L-lysyl-[glycine-cleavage complex H protein] + glycine + H(+) = N(6)-[(R)-S(8)-aminomethyldihydrolipoyl]-L-lysyl-[glycine-cleavage complex H protein] + CO2. In terms of biological role, the glycine cleavage system catalyzes the degradation of glycine. The P protein binds the alpha-amino group of glycine through its pyridoxal phosphate cofactor; CO(2) is released and the remaining methylamine moiety is then transferred to the lipoamide cofactor of the H protein. The polypeptide is Glycine dehydrogenase (decarboxylating) (Neisseria gonorrhoeae (strain NCCP11945)).